We begin with the raw amino-acid sequence, 576 residues long: Trehalase (576 aa).

Residues 1–20 (MTWELHLLLLLGLGLRSQEA) form the signal peptide. The N-linked (GlcNAc...) asparagine glycan is linked to N75. Substrate is bound by residues R165, 172-173 (WD), N209, and 218-220 (RSQ). An N-linked (GlcNAc...) asparagine glycan is attached at N258. Substrate-binding positions include 283-285 (RPE) and G316. D318 acts as the Proton donor/acceptor in catalysis. N366 carries N-linked (GlcNAc...) asparagine glycosylation. E511 functions as the Proton donor/acceptor in the catalytic mechanism. Substrate is bound at residue E526. S553 carries the GPI-anchor amidated serine lipid modification. Residues 554-576 (GTQLASLGPHCLVAALLLSLLLQ) constitute a propeptide, removed in mature form.

The protein belongs to the glycosyl hydrolase 37 family. In terms of assembly, homodimer; disulfide-linked.

The protein localises to the cell membrane. The enzyme catalyses alpha,alpha-trehalose + H2O = alpha-D-glucose + beta-D-glucose. Its function is as follows. Intestinal trehalase is probably involved in the hydrolysis of ingested trehalose. In Mus musculus (Mouse), this protein is Trehalase.